Here is a 524-residue protein sequence, read N- to C-terminus: MTINQKEAVDSRRTFAIISHPDAGKTTITEQLLLFGGAIRQAGTVKGKKTGNFAKSDWMEIEKQRGISVTSSVMQFDYQDKRINILDTPGHEDFSEDTYRTLMAVDSAVMVIDSAKGIEAQTKKLFQVVKKRGIPIFTFINKLDRDGREPLELLEELEELLDIESYPMNWPIGMGKGLEGLYDIYNERVELYRPENNGGERFIPLKDGDIPSDLPLHNNSVYQQVLEDVELLVEAGDEFSEEKIARGDQTPVFFGSALTNFGVQTFLETFLQFAPAPHAHKTEEGGEVSPYEKEFSGFVFKIQANMNPAHRDRIAFVRICSGVFERGMDVTLGRTGKKVKLSNVTQFMADARENVTEAVAGDIIGVYDTGNYQIGDTLYEGKMNVQYEELPSFTPELFMKVTAKNVMKQKSFHKGIYQLVQEGAIQLYKTYLTEEYIIGAVGQLQFEVFQYRMSNEYNAEVVMTPMGSKIARWINPEDLDERMSSSRNILARDRFDQPLFLFENQFAERWFADKYPDVELKSLM.

The region spanning 10–278 (DSRRTFAIIS…TFLQFAPAPH (269 aa)) is the tr-type G domain. GTP is bound by residues 19 to 26 (SHPDAGKT), 87 to 91 (DTPGH), and 141 to 144 (NKLD).

Belongs to the TRAFAC class translation factor GTPase superfamily. Classic translation factor GTPase family. PrfC subfamily.

The protein resides in the cytoplasm. Its function is as follows. Increases the formation of ribosomal termination complexes and stimulates activities of RF-1 and RF-2. It binds guanine nucleotides and has strong preference for UGA stop codons. It may interact directly with the ribosome. The stimulation of RF-1 and RF-2 is significantly reduced by GTP and GDP, but not by GMP. The protein is Peptide chain release factor 3 of Enterococcus faecalis (strain ATCC 700802 / V583).